We begin with the raw amino-acid sequence, 627 residues long: Plastin-3 (627 aa).

2 EF-hand domains span residues 8–43 (EELE…ANLP) and 48–83 (KVRE…LKSG). D21, N23, N25, E32, D61, N63, D65, M67, and E72 together coordinate Ca(2+). Actin-binding stretches follow at residues 105–378 (TSEL…ALTK) and 379–624 (PENQ…GRGM). 4 consecutive Calponin-homology (CH) domains span residues 119-235 (EEER…KIGL), 263-374 (LSPE…NKYP), 393-503 (TREE…RRYT), and 515-624 (KVND…GRGM).

It is found in the cytoplasm. Functionally, actin-bundling protein. The polypeptide is Plastin-3 (pls3) (Danio rerio (Zebrafish)).